The sequence spans 904 residues: Putative pentatricopeptide repeat-containing protein At1g19290 (904 aa).

19 PPR repeats span residues 154-188 (SPTV…GRIP), 189-223 (SLLS…EVSP), 224-254 (DVFT…TESS), 260-294 (NVVT…GVSR), 295-329 (NVVT…KLVA), 330-364 (DQHM…GVRT), 365-399 (NTTI…SLKP), 400-434 (DHHT…EVVP), 435-469 (TVMT…GVNA), 470-504 (DEIS…GLLT), 505-539 (DTIT…RCKP), 540-574 (AVQT…GIFP), 575-609 (TIEM…GLTP), 610-644 (TVAT…GITL), 645-679 (NVNI…DLLL), 718-753 (NNIV…RFIP), 754-788 (DEYT…GIIP), 789-823 (NIVT…GITP), and 824-858 (NAIT…GLVR).

Belongs to the PPR family. P subfamily.

The sequence is that of Putative pentatricopeptide repeat-containing protein At1g19290 from Arabidopsis thaliana (Mouse-ear cress).